Reading from the N-terminus, the 254-residue chain is Leucyl/phenylalanyl-tRNA--protein transferase (254 aa).

The segment covering 1–10 has biased composition (pro residues); the sequence is MSSQPPPLPW. Residues 1-28 are disordered; that stretch reads MSSQPPPLPWLDPNQDFPPTSQAWDENS.

This sequence belongs to the L/F-transferase family.

The protein localises to the cytoplasm. It carries out the reaction N-terminal L-lysyl-[protein] + L-leucyl-tRNA(Leu) = N-terminal L-leucyl-L-lysyl-[protein] + tRNA(Leu) + H(+). The catalysed reaction is N-terminal L-arginyl-[protein] + L-leucyl-tRNA(Leu) = N-terminal L-leucyl-L-arginyl-[protein] + tRNA(Leu) + H(+). The enzyme catalyses L-phenylalanyl-tRNA(Phe) + an N-terminal L-alpha-aminoacyl-[protein] = an N-terminal L-phenylalanyl-L-alpha-aminoacyl-[protein] + tRNA(Phe). Functions in the N-end rule pathway of protein degradation where it conjugates Leu, Phe and, less efficiently, Met from aminoacyl-tRNAs to the N-termini of proteins containing an N-terminal arginine or lysine. This Albidiferax ferrireducens (strain ATCC BAA-621 / DSM 15236 / T118) (Rhodoferax ferrireducens) protein is Leucyl/phenylalanyl-tRNA--protein transferase.